Consider the following 407-residue polypeptide: Probable sodium/metabolite cotransporter BASS5, chloroplastic (407 aa).

A chloroplast-targeting transit peptide spans 1 to 57 (MGVISPTETLFLKSQHRLLQPRNYSYALAFHSTRRVANFPRNSFSSLGSCSVDFPLR). Transmembrane regions (helical) follow at residues 101–121 (FIPHGILLSTILALVYPPSFT), 122–142 (WFKPRYFVPGLGFMMFAVGIN), 162–184 (YIGQYLIKPLLGYIFGVIAVSLF), 191–213 (GAGIMLVSCVSGAQLSNYTTFLT), 222–242 (IVMTSISTATAVLVTPMLSLL), 252–272 (VFGMISSILQVVITPIAAGLL), 286–306 (PFLPALTVIDMSCCIGAPLAL), 317–337 (ATILFLVITFHLLAFVAGYFF), and 379–399 (LVGVPPAISTVVMSLMGVSLV).

The protein belongs to the bile acid:sodium symporter (BASS) (TC 2.A.28) family. In terms of tissue distribution, widely expressed.

The protein localises to the membrane. Its subcellular location is the plastid. It is found in the chloroplast envelope. Functionally, plastidic transporter involved in the biosynthesis of aliphatic glucosinolates by translocating the biosynthetic intermediates of Met-derived glucosinolates across chloroplast membranes. Transports short chain (C2) alpha-keto acids, such as 4-methylsulfanyl-2-oxobutanoic acid, from the cytosol to the chloroplast where they are subjected to chain elongation cycles. Also functions in the transport of chain-elongated (C3 to C8) Met derivatives from the chloroplast to the cytosol. Does not seem to be involved in the transport of indole-derived glucosinolates. The sequence is that of Probable sodium/metabolite cotransporter BASS5, chloroplastic (BASS5) from Arabidopsis thaliana (Mouse-ear cress).